The chain runs to 347 residues: Single-pass membrane and coiled-coil domain-containing protein 2 (347 aa).

The interval 1 to 89 (MMSLQLGTAG…PPSKPDEQEV (89 aa)) is disordered. Basic and acidic residues-rich tracts occupy residues 10–21 (GKERQLAEKSRD), 36–51 (EMDH…DKPS), and 60–86 (YKMD…KPDE). Residues 139 to 238 (DWLERINNII…MNVLNSKLEM (100 aa)) are a coiled coil. Phosphoserine is present on Ser178. The tract at residues 243–274 (GSDADSHNSEDVDTEQEEPLVPEASPSLSASP) is disordered. A compositionally biased stretch (acidic residues) spans 253 to 262 (DVDTEQEEPL). Residues 263-273 (VPEASPSLSAS) show a composition bias toward low complexity. Residues 288-308 (LFVIVYVVTITGLSCYILFVD) traverse the membrane as a helical segment.

It is found in the membrane. The polypeptide is Single-pass membrane and coiled-coil domain-containing protein 2 (Smco2) (Mus musculus (Mouse)).